The following is a 276-amino-acid chain: uncharacterized protein (276 aa).

The disordered stretch occupies residues 1-20 (MMSDEQHQGGDGQTTTNTNT).

This is an uncharacterized protein from Dictyostelium discoideum (Social amoeba).